Consider the following 301-residue polypeptide: NAD kinase (301 aa).

The active-site Proton acceptor is aspartate 73. Residues 73-74 (DG), 151-152 (ND), arginine 179, aspartate 181, 192-197 (TAYALS), alanine 216, and glutamine 250 contribute to the NAD(+) site.

This sequence belongs to the NAD kinase family. The cofactor is a divalent metal cation.

It localises to the cytoplasm. It carries out the reaction NAD(+) + ATP = ADP + NADP(+) + H(+). Involved in the regulation of the intracellular balance of NAD and NADP, and is a key enzyme in the biosynthesis of NADP. Catalyzes specifically the phosphorylation on 2'-hydroxyl of the adenosine moiety of NAD to yield NADP. In Methylibium petroleiphilum (strain ATCC BAA-1232 / LMG 22953 / PM1), this protein is NAD kinase.